The chain runs to 375 residues: 4-hydroxy-3-methylbut-2-en-1-yl diphosphate synthase (flavodoxin) (375 aa).

The [4Fe-4S] cluster site is built by Cys275, Cys278, Cys310, and Glu317.

The protein belongs to the IspG family. [4Fe-4S] cluster is required as a cofactor.

It catalyses the reaction (2E)-4-hydroxy-3-methylbut-2-enyl diphosphate + oxidized [flavodoxin] + H2O + 2 H(+) = 2-C-methyl-D-erythritol 2,4-cyclic diphosphate + reduced [flavodoxin]. The protein operates within isoprenoid biosynthesis; isopentenyl diphosphate biosynthesis via DXP pathway; isopentenyl diphosphate from 1-deoxy-D-xylulose 5-phosphate: step 5/6. In terms of biological role, converts 2C-methyl-D-erythritol 2,4-cyclodiphosphate (ME-2,4cPP) into 1-hydroxy-2-methyl-2-(E)-butenyl 4-diphosphate. This chain is 4-hydroxy-3-methylbut-2-en-1-yl diphosphate synthase (flavodoxin), found in Ruegeria pomeroyi (strain ATCC 700808 / DSM 15171 / DSS-3) (Silicibacter pomeroyi).